Reading from the N-terminus, the 88-residue chain is MYILEISLKFTPMPVSVQRKEAEAAQAAYQQVVEALRSGQPSVLELHCEFQAEKKLAVLTSGIASVQLYEKSGGSATVKRPGFAVIGE.

Belongs to the UPF0367 family.

The chain is UPF0367 protein syc2447_c from Synechococcus sp. (strain ATCC 27144 / PCC 6301 / SAUG 1402/1) (Anacystis nidulans).